The chain runs to 328 residues: Transcription initiation factor TFIID subunit 8 (328 aa).

The 68-residue stretch at 16-83 (RRILNKVVSQ…DVSLALINMG (68 aa)) folds into the Histone-fold domain. Residues 229 to 309 (NRTEDEPSKD…PGTMPSRSLA (81 aa)) form a disordered region. Phosphoserine is present on residues Ser-236, Ser-245, and Ser-255. Residues 239 to 251 (DGEEGDSENEEMD) show a composition bias toward acidic residues. A compositionally biased stretch (basic and acidic residues) spans 252–264 (GDKSKEEKPELDI). Over residues 296–309 (NCPTPGTMPSRSLA) the composition is skewed to polar residues.

The protein belongs to the TAF8 family. In terms of assembly, belongs to the TFIID complex which is composed of TATA binding protein (Tbp) and a number of TBP-associated factors (TAFs). Histone fold interacts with N-terminus of Taf10b.

Its subcellular location is the nucleus. Functionally, TFIID is a multimeric protein complex that plays a central role in mediating promoter responses to various activators and repressors. The protein is Transcription initiation factor TFIID subunit 8 of Drosophila melanogaster (Fruit fly).